We begin with the raw amino-acid sequence, 636 residues long: DNA-directed RNA polymerase subunit gamma (636 aa).

Zn(2+) is bound by residues cysteine 71, cysteine 73, cysteine 86, and cysteine 89. Mg(2+) contacts are provided by aspartate 467, aspartate 469, and aspartate 471.

Belongs to the RNA polymerase beta' chain family. RpoC1 subfamily. As to quaternary structure, in cyanobacteria the RNAP catalytic core is composed of 2 alpha, 1 beta, 1 beta', 1 gamma and 1 omega subunit. When a sigma factor is associated with the core the holoenzyme is formed, which can initiate transcription. Mg(2+) is required as a cofactor. Zn(2+) serves as cofactor.

It catalyses the reaction RNA(n) + a ribonucleoside 5'-triphosphate = RNA(n+1) + diphosphate. In terms of biological role, DNA-dependent RNA polymerase catalyzes the transcription of DNA into RNA using the four ribonucleoside triphosphates as substrates. The protein is DNA-directed RNA polymerase subunit gamma of Picosynechococcus sp. (strain ATCC 27264 / PCC 7002 / PR-6) (Agmenellum quadruplicatum).